Reading from the N-terminus, the 476-residue chain is Bifunctional protein HldE (476 aa).

Residues 1–319 (MKITLPEYDK…ANAVYSQQEI (319 aa)) form a ribokinase region. 196-199 (NLAE) serves as a coordination point for ATP. D265 is an active-site residue. Residues 345–476 (MTNGCFDILH…EIIKTIRNNS (132 aa)) form a cytidylyltransferase region.

In the N-terminal section; belongs to the carbohydrate kinase PfkB family. It in the C-terminal section; belongs to the cytidylyltransferase family. Homodimer.

The enzyme catalyses D-glycero-beta-D-manno-heptose 7-phosphate + ATP = D-glycero-beta-D-manno-heptose 1,7-bisphosphate + ADP + H(+). It catalyses the reaction D-glycero-beta-D-manno-heptose 1-phosphate + ATP + H(+) = ADP-D-glycero-beta-D-manno-heptose + diphosphate. The protein operates within nucleotide-sugar biosynthesis; ADP-L-glycero-beta-D-manno-heptose biosynthesis; ADP-L-glycero-beta-D-manno-heptose from D-glycero-beta-D-manno-heptose 7-phosphate: step 1/4. It participates in nucleotide-sugar biosynthesis; ADP-L-glycero-beta-D-manno-heptose biosynthesis; ADP-L-glycero-beta-D-manno-heptose from D-glycero-beta-D-manno-heptose 7-phosphate: step 3/4. In terms of biological role, catalyzes the phosphorylation of D-glycero-D-manno-heptose 7-phosphate at the C-1 position to selectively form D-glycero-beta-D-manno-heptose-1,7-bisphosphate. Catalyzes the ADP transfer from ATP to D-glycero-beta-D-manno-heptose 1-phosphate, yielding ADP-D-glycero-beta-D-manno-heptose. This is Bifunctional protein HldE from Psychromonas ingrahamii (strain DSM 17664 / CCUG 51855 / 37).